The sequence spans 339 residues: MNSVFQGRSLLAEKDFSRAELEYLVDFSIHLKELKKKGIPHHYLEGKNIALLFEKTSTRTRSAFTTAAIDLGAHPEYLGANDIQLGKKESVEDTAIVLGSMFDGIEFRGFSQEVVEDLAKYSGVPVWNGLTDQWHPTQMIADFMTVKENFGRLEGITLVYVGDGRNNMANSLLVTGAILGVNVRICAPKELFPSDEVVNYAKEFAKESGAELMITDDVAKGVKGANVLYTDVWVSMGEEDKFEERVNLLKPYQINMAMLEKTENMDGDLIVLHCLPAFHDTKTQYGEMVAEKFGITEMEITDEVFRSKYGRQFEEAENRMHSIKAIMAATLGNLFIPRV.

Carbamoyl phosphate is bound by residues 57-60 (STRT), Gln84, Arg108, and 135-138 (HPTQ). L-ornithine-binding positions include Asn167, Asp231, and 235 to 236 (SM). Residues 274–275 (CL) and Arg319 contribute to the carbamoyl phosphate site.

The protein belongs to the aspartate/ornithine carbamoyltransferase superfamily. OTCase family.

The protein localises to the cytoplasm. It carries out the reaction carbamoyl phosphate + L-ornithine = L-citrulline + phosphate + H(+). The protein operates within amino-acid degradation; L-arginine degradation via ADI pathway; carbamoyl phosphate from L-arginine: step 2/2. Functionally, reversibly catalyzes the transfer of the carbamoyl group from carbamoyl phosphate (CP) to the N(epsilon) atom of ornithine (ORN) to produce L-citrulline. In Enterococcus faecalis (strain ATCC 700802 / V583), this protein is Ornithine carbamoyltransferase, catabolic (arcB).